Consider the following 105-residue polypeptide: Endogenous retrovirus group K member 16 Rec protein (105 aa).

The segment at 1–41 is disordered; it reads MNPSEMQRKAPPRRRRHRNRAPSSHKMNKMMMSEEQMKLPS. The span at 10 to 20 shows a compositional bias: basic residues; the sequence is APPRRRRHRNR. A Nuclear localization signal motif is present at residues 13–20; it reads RRRRHRNR. Residues 50–59 carry the Nuclear export signal motif; the sequence is WAQLNKLTQL.

In terms of assembly, forms homodimers, homotrimers, and homotetramers via a C-terminal domain. Associates with XPO1 and with ZNF145.

The protein localises to the cytoplasm. It is found in the nucleus. The protein resides in the nucleolus. Functionally, retroviral replication requires the nuclear export and translation of unspliced, singly-spliced and multiply-spliced derivatives of the initial genomic transcript. Rec interacts with a highly structured RNA element (RcRE) present in the viral 3'LTR and recruits the cellular nuclear export machinery. This permits export to the cytoplasm of unspliced genomic or incompletely spliced subgenomic viral transcripts. This chain is Endogenous retrovirus group K member 16 Rec protein (ERVK-16), found in Homo sapiens (Human).